Here is a 63-residue protein sequence, read N- to C-terminus: Large ribosomal subunit protein uL29 (63 aa).

Belongs to the universal ribosomal protein uL29 family.

This chain is Large ribosomal subunit protein uL29, found in Caulobacter vibrioides (strain ATCC 19089 / CIP 103742 / CB 15) (Caulobacter crescentus).